The following is a 470-amino-acid chain: Aminoacyl transferase sphA (470 aa).

Ser212, His244, and Thr272 together coordinate pyridoxal 5'-phosphate. Lys275 is subject to N6-(pyridoxal phosphate)lysine.

The protein belongs to the class-II pyridoxal-phosphate-dependent aminotransferase family. BioF subfamily. In terms of assembly, homodimer. The cofactor is pyridoxal 5'-phosphate.

The catalysed reaction is aminomalonate + (3R)-hydroxyoctadeca-4,10-dienoyl-[ACP] = 3-oxopresphingofungin + holo-[ACP] + CO2. It functions in the pathway secondary metabolite biosynthesis. Functionally, aminoacyl transferase; part of the gene cluster that mediates the biosynthesis of sphingofungins, bioactive molecules acting as sphingolipid inhibitors via inhibiting serine palmitoyl transferase (SPT). Within the pathway, sphA transfers aminomalonate onto the sphB product 3-hydroxyoctadeca-4,10-dienoyl-ACP to produce 3-keto-presphingofungin. The substrate specificity of sphA using only aminomalonate in Aspergillus fumigatus is responsible for the biosynthesis of sphingofungins B and C but not E and F like in Byssochlamys spectabilis. The PKS sphB does not contain any putative thioesterase domain for releasing the nascent polyketide chain and it has been suggested that aminoacyl transferases can facilitate the polyketide chain release. Sphingofungin biosynthesis starts with the PKS sphB that produces an C18 polyketide precursor 3-hydroxyoctadeca-4,10-dienoyl-ACP containing one delta-6 desaturation and one delta-12 desaturation. The aminoacyl transferase sphA uses the sphB product to produce 3-keto-presphingofungin by adding an aminomalonate molecule. SphF then reduces the C-3 ketone of 3-keto-presphingofungin which leads to presphingofungin. The cytochrome P450 monooxygenase sphH converts presphingofungin into sphingofungin B1 which is further converted to sphingofungin B by the dioxygenase sphC. SphC is also able to convert presphingofungin into sphingofungin B2. The acetyltransferase sphE acetylates sphingofungin B to produce sphingofungin C, but can also convert sphingofungin B1 into sphingofungin C1 and sphingofungin B2 into sphingofungin C2. Finally, sphingofungin C can be spontaneously converted into sphingofungin D. The protein is Aminoacyl transferase sphA of Aspergillus fumigatus (strain CBS 144.89 / FGSC A1163 / CEA10) (Neosartorya fumigata).